Reading from the N-terminus, the 714-residue chain is MEYKFSTVVDPGTYETHGLCEGYEVRYHKNAELEDIGCLRCQEHWRQSVGPLGAFKGTLGNPFNLLSLVIPECLPDRLSIVGFANELAFIHDDVTDIVQYGDAHNNDFKEAFNSMATTGSMENAASGKRALQAYIAREMVRIDKERAIPTIKAWAKFVDYGGRQETTRFTSEKEYTEYRIQDIGLWFWYGLLSFAMALDVPEHEREMCHEVCRTAYVQIMLVHDLASWEKEKLNAAALGKDVITNIIFVLMEEHGISEEEAKERCRETAKTLAADYLKIVEEYKARDDISLDSRKYIESWLYTISGNTVWSFICPRYNSSGSFSDHQLELMKNGVPKDPASGSTNGTSNGTSNGTSHVAVNGNGHVTNDDLSANGIKTDGELLSAITMEHLKNRNSFKLGDHDQEVKSLHGHGQALDPRVLQAPYEYITALPSKGLREQAIDALNVWFRVPTAKLEIIKSITTILHNASLMLDDVEDGSELRRGKPATHNIFGLGQTINSANYQLVRALQELQKLGDARSLLVFTEELHNLYVGQSMDLYWTSNLVCPSMHEYFQMIEHKTGGLFRLFGRLMAVHSTNPVQVDLTDFTNHLGRYFQTRDDYQNLVSAEYTKQKGFCEDFEEGKFSLPMIHLMQTMPDNLVLRNVWTQRRVNGTATHGQKQTILNLMKEAGTLKFTQDSLGVLYSDVEKSVAELESKFGIENFQLRLIMELLKTG.

A stellata-2,6,19-trien synthase region spans residues 1–325; that stretch reads MEYKFSTVVD…RYNSSGSFSD (325 aa). D92 and D96 together coordinate Mg(2+). A DDXXD motif 1 motif is present at residues 92–96; the sequence is DDVTD. The short motif at 276–284 is the NSE motif element; it reads YLKIVEEYK. The geranylgeranyl diphosphate synthase stretch occupies residues 326–713; the sequence is HQLELMKNGV…LRLIMELLKT (388 aa). Positions 332 to 356 are disordered; the sequence is KNGVPKDPASGSTNGTSNGTSNGTS. The span at 341–356 shows a compositional bias: low complexity; the sequence is SGSTNGTSNGTSNGTS. K434, R437, and H466 together coordinate isopentenyl diphosphate. Residues D473 and D477 each coordinate Mg(2+). A DDXXD motif 2 motif is present at residues 473–477; it reads DDVED. R482 lines the dimethylallyl diphosphate pocket. R483 contributes to the isopentenyl diphosphate binding site. Positions 560, 561, 596, 603, 613, and 623 each coordinate dimethylallyl diphosphate.

It in the N-terminal section; belongs to the terpene synthase family. In the C-terminal section; belongs to the FPP/GGPP synthase family. Hexamer.

It catalyses the reaction 4 isopentenyl diphosphate + dimethylallyl diphosphate = (2E,6E,10E,14E)-geranylfarnesyl diphosphate + 4 diphosphate. The catalysed reaction is (2E,6E,10E,14E)-geranylfarnesyl diphosphate = stellata-2,6,19-triene + diphosphate. It functions in the pathway secondary metabolite biosynthesis; terpenoid biosynthesis. Functionally, multifunctional diterpene synthase; part of the gene cluster that mediates the biosynthesis of the sesterterpene stellatic acid. The first step in the pathway is performed by the stellatatriene synthase that possesses both prenyl transferase and terpene cyclase activity, converting isopentenyl diphosphate and dimethylallyl diphosphate into geranylgeranyl diphosphate (GGDP) and then converting GGDP into stellata-2,6,19-triene. The cytochrome P450 monooxygenase Stl-P450 then catalyzes three successive oxidation reactions on the C-20 methyl group to generate the carboxylic acid of stellatic acid. In Emericella variicolor (Aspergillus stellatus), this protein is Stellatatriene synthase.